Reading from the N-terminus, the 560-residue chain is Formate--tetrahydrofolate ligase (560 aa).

69–76 (TPAGEGKS) provides a ligand contact to ATP.

This sequence belongs to the formate--tetrahydrofolate ligase family.

It catalyses the reaction (6S)-5,6,7,8-tetrahydrofolate + formate + ATP = (6R)-10-formyltetrahydrofolate + ADP + phosphate. It participates in one-carbon metabolism; tetrahydrofolate interconversion. In Bacillus pumilus (strain SAFR-032), this protein is Formate--tetrahydrofolate ligase.